The following is a 288-amino-acid chain: Protoheme IX farnesyltransferase (288 aa).

The next 9 helical transmembrane spans lie at 8-28, 35-55, 75-95, 105-125, 130-150, 161-181, 205-225, 230-250, and 265-285; these read IIKPGIIFGNIISTIGGFLLA, VNLFIFTISATAILIASASIF, IAIGLISSNIAYIYALILLIL, FLTIFISMLGFFIYVFIYSLL, SVYSTIIGSLSGATPPIIGYC, FILLCIFSFWQIPHSYAIGLV, INIIIYIIAFFISTIMLFFAG, NYLFFSIFFGLIWIFIAIKGF, and IFLFSIVIITAISILISIDYK.

This sequence belongs to the UbiA prenyltransferase family. Protoheme IX farnesyltransferase subfamily.

It is found in the cell membrane. The enzyme catalyses heme b + (2E,6E)-farnesyl diphosphate + H2O = Fe(II)-heme o + diphosphate. Its pathway is porphyrin-containing compound metabolism; heme O biosynthesis; heme O from protoheme: step 1/1. In terms of biological role, converts heme B (protoheme IX) to heme O by substitution of the vinyl group on carbon 2 of heme B porphyrin ring with a hydroxyethyl farnesyl side group. The sequence is that of Protoheme IX farnesyltransferase from Wigglesworthia glossinidia brevipalpis.